The sequence spans 518 residues: GMP synthase [glutamine-hydrolyzing] (518 aa).

The 194-residue stretch at 8 to 201 (TVLIIDFGSQ…VCKISGIKNN (194 aa)) folds into the Glutamine amidotransferase type-1 domain. Cys-85 acts as the Nucleophile in catalysis. Active-site residues include His-175 and Glu-177. Positions 202–393 (WSMAAYRDQA…LGLPEEFIKR (192 aa)) constitute a GMPS ATP-PPase domain. Residue 229–235 (SGGVDSS) participates in ATP binding.

In terms of assembly, homodimer.

It catalyses the reaction XMP + L-glutamine + ATP + H2O = GMP + L-glutamate + AMP + diphosphate + 2 H(+). Its pathway is purine metabolism; GMP biosynthesis; GMP from XMP (L-Gln route): step 1/1. In terms of biological role, catalyzes the synthesis of GMP from XMP. The sequence is that of GMP synthase [glutamine-hydrolyzing] from Bartonella bacilliformis (strain ATCC 35685 / KC583 / Herrer 020/F12,63).